The following is a 313-amino-acid chain: Beta-ketoacyl-[acyl-carrier-protein] synthase III (313 aa).

Active-site residues include cysteine 112 and histidine 238. The ACP-binding stretch occupies residues 239 to 243; that stretch reads QANIR. Asparagine 268 is an active-site residue.

It belongs to the thiolase-like superfamily. FabH family. Homodimer.

It is found in the cytoplasm. The enzyme catalyses malonyl-[ACP] + acetyl-CoA + H(+) = 3-oxobutanoyl-[ACP] + CO2 + CoA. It functions in the pathway lipid metabolism; fatty acid biosynthesis. Catalyzes the condensation reaction of fatty acid synthesis by the addition to an acyl acceptor of two carbons from malonyl-ACP. Catalyzes the first condensation reaction which initiates fatty acid synthesis and may therefore play a role in governing the total rate of fatty acid production. Possesses both acetoacetyl-ACP synthase and acetyl transacylase activities. Its substrate specificity determines the biosynthesis of branched-chain and/or straight-chain of fatty acids. This Staphylococcus haemolyticus (strain JCSC1435) protein is Beta-ketoacyl-[acyl-carrier-protein] synthase III.